The primary structure comprises 214 residues: MKAFTQHTGIVAPLDRANVDTDQIIPKQFLKSIKRTGFGPNLFDEWRYLDVGQPYQDNSKRPLNEEFVLNHARYQGASVLLARENFGCGSSREHAPWALDEYGFRSIIAPSFADIFFNNSFKNGLLPIILSDEEVDELFKQVEANPGYQLTIDLQAQAVTRPDGKVLHFEIDAFRKHCLLNGLDDIGLTLQDSDAIKAFEAKHRASQPWLFRDA.

It belongs to the LeuD family. LeuD type 1 subfamily. As to quaternary structure, heterodimer of LeuC and LeuD.

The catalysed reaction is (2R,3S)-3-isopropylmalate = (2S)-2-isopropylmalate. The protein operates within amino-acid biosynthesis; L-leucine biosynthesis; L-leucine from 3-methyl-2-oxobutanoate: step 2/4. Its function is as follows. Catalyzes the isomerization between 2-isopropylmalate and 3-isopropylmalate, via the formation of 2-isopropylmaleate. This is 3-isopropylmalate dehydratase small subunit from Pseudomonas putida (strain ATCC 47054 / DSM 6125 / CFBP 8728 / NCIMB 11950 / KT2440).